The sequence spans 670 residues: UvrABC system protein B (670 aa).

The 158-residue stretch at 26–183 folds into the Helicase ATP-binding domain; it reads NGLKSGLAFQ…QRLVDLQYNR (158 aa). 39–46 serves as a coordination point for ATP; the sequence is GVTGSGKT. A Beta-hairpin motif is present at residues 92–115; it reads YYDYYQPEAYVPSSDSFIEKDAAI. A Helicase C-terminal domain is found at 431 to 597; it reads QVDDLLSEIN…GLSKQVNDVM (167 aa). The 36-residue stretch at 630 to 665 folds into the UVR domain; that stretch reads LKQIALSEKQMFACAKNLEFEKAALFRDEVTKLHEQ.

Belongs to the UvrB family. In terms of assembly, forms a heterotetramer with UvrA during the search for lesions. Interacts with UvrC in an incision complex.

The protein resides in the cytoplasm. In terms of biological role, the UvrABC repair system catalyzes the recognition and processing of DNA lesions. A damage recognition complex composed of 2 UvrA and 2 UvrB subunits scans DNA for abnormalities. Upon binding of the UvrA(2)B(2) complex to a putative damaged site, the DNA wraps around one UvrB monomer. DNA wrap is dependent on ATP binding by UvrB and probably causes local melting of the DNA helix, facilitating insertion of UvrB beta-hairpin between the DNA strands. Then UvrB probes one DNA strand for the presence of a lesion. If a lesion is found the UvrA subunits dissociate and the UvrB-DNA preincision complex is formed. This complex is subsequently bound by UvrC and the second UvrB is released. If no lesion is found, the DNA wraps around the other UvrB subunit that will check the other stand for damage. The protein is UvrABC system protein B of Psychromonas ingrahamii (strain DSM 17664 / CCUG 51855 / 37).